The following is a 203-amino-acid chain: dITP/XTP pyrophosphatase (203 aa).

Residue 16–21 participates in substrate binding; sequence SHNRGK. 2 residues coordinate Mg(2+): Glu-48 and Asp-77. Residue Asp-77 is the Proton acceptor of the active site. Substrate-binding positions include Ser-78, 161–164, Lys-184, and 189–190; these read FGYD and HR.

It belongs to the HAM1 NTPase family. In terms of assembly, homodimer. It depends on Mg(2+) as a cofactor.

It carries out the reaction XTP + H2O = XMP + diphosphate + H(+). The enzyme catalyses dITP + H2O = dIMP + diphosphate + H(+). The catalysed reaction is ITP + H2O = IMP + diphosphate + H(+). Pyrophosphatase that catalyzes the hydrolysis of nucleoside triphosphates to their monophosphate derivatives, with a high preference for the non-canonical purine nucleotides XTP (xanthosine triphosphate), dITP (deoxyinosine triphosphate) and ITP. Seems to function as a house-cleaning enzyme that removes non-canonical purine nucleotides from the nucleotide pool, thus preventing their incorporation into DNA/RNA and avoiding chromosomal lesions. The protein is dITP/XTP pyrophosphatase of Rhodospirillum centenum (strain ATCC 51521 / SW).